A 216-amino-acid polypeptide reads, in one-letter code: Large ribosomal subunit protein uL3 (216 aa).

The interval 132–157 (FRGQGASHGTQAVHRKPGSIGGCATP) is disordered.

Belongs to the universal ribosomal protein uL3 family. Part of the 50S ribosomal subunit. Forms a cluster with proteins L14 and L19.

In terms of biological role, one of the primary rRNA binding proteins, it binds directly near the 3'-end of the 23S rRNA, where it nucleates assembly of the 50S subunit. In Saccharopolyspora erythraea (strain ATCC 11635 / DSM 40517 / JCM 4748 / NBRC 13426 / NCIMB 8594 / NRRL 2338), this protein is Large ribosomal subunit protein uL3.